Here is a 60-residue protein sequence, read N- to C-terminus: Large ribosomal subunit protein bL32 (60 aa).

Belongs to the bacterial ribosomal protein bL32 family.

In Streptococcus pneumoniae serotype 4 (strain ATCC BAA-334 / TIGR4), this protein is Large ribosomal subunit protein bL32.